Consider the following 409-residue polypeptide: Dipeptidase 1 (409 aa).

The first 16 residues, 1–16 (MWTSWWLWPLVAVCAA), serve as a signal peptide directing secretion. Positions 36 and 38 each coordinate Zn(2+). Asparagine 57 carries an N-linked (GlcNAc...) asparagine glycan. Cysteine 87 and cysteine 170 are disulfide-bonded. Glutamate 141 provides a ligand contact to Zn(2+). Residue histidine 168 coordinates substrate. 2 residues coordinate Zn(2+): histidine 214 and histidine 235. A disulfide bond links cysteine 242 and cysteine 274. Arginine 246 contributes to the substrate binding site. Asparagine 279 carries N-linked (GlcNAc...) asparagine glycosylation. A substrate-binding site is contributed by aspartate 304. Serine 384 carries GPI-anchor amidated serine lipidation. Residues 385–409 (AAPSLHLPPGSLLASLVPLLLLSLP) constitute a propeptide, removed in mature form.

This sequence belongs to the metallo-dependent hydrolases superfamily. Peptidase M19 family. In terms of assembly, homodimer; disulfide-linked. Requires Zn(2+) as cofactor.

It is found in the apical cell membrane. The protein resides in the cell projection. Its subcellular location is the microvillus membrane. The protein localises to the cell membrane. It catalyses the reaction an L-aminoacyl-L-amino acid + H2O = 2 an L-alpha-amino acid. It carries out the reaction leukotriene D4 + H2O = leukotriene E4 + glycine. The catalysed reaction is L-cystine-bis-glycine + 2 H2O = L-cystine + 2 glycine. The enzyme catalyses a beta-lactam + H2O = a substituted beta-amino acid. It catalyses the reaction glycyldehydrophenylalanine + H2O = 2,3-didehydrophenylalanine + glycine. With respect to regulation, inhibited by L-penicillamine. Inhibited by cilastatin. Functionally, hydrolyzes a wide range of dipeptides. Hydrolyzes the conversion of leukotriene D4 to leukotriene E4. Hydrolyzes cystinyl-bis-glycine (cys-bis-gly) formed during glutathione degradation. Also possesses beta lactamase activity and hydrolytically inactivates beta-lactam antibiotics. In terms of biological role, independently of its dipeptidase activity, acts as an adhesion receptor for neutrophil recruitment from bloodstream into inflamed lungs and liver. The protein is Dipeptidase 1 (DPEP1) of Sus scrofa (Pig).